A 206-amino-acid chain; its full sequence is Small ribosomal subunit protein uS4 (206 aa).

Positions 96–156 (GRLDNVVYRM…EKAKKQSRVK (61 aa)) constitute an S4 RNA-binding domain.

The protein belongs to the universal ribosomal protein uS4 family. As to quaternary structure, part of the 30S ribosomal subunit. Contacts protein S5. The interaction surface between S4 and S5 is involved in control of translational fidelity.

One of the primary rRNA binding proteins, it binds directly to 16S rRNA where it nucleates assembly of the body of the 30S subunit. In terms of biological role, with S5 and S12 plays an important role in translational accuracy. The sequence is that of Small ribosomal subunit protein uS4 from Serratia proteamaculans (strain 568).